The following is a 364-amino-acid chain: Phosphoserine aminotransferase (364 aa).

Arg46 is an L-glutamate binding site. Pyridoxal 5'-phosphate contacts are provided by residues 80 to 81 (AR), Trp106, Thr157, Asp176, and Gln199. An N6-(pyridoxal phosphate)lysine modification is found at Lys200. Position 241–242 (241–242 (NT)) interacts with pyridoxal 5'-phosphate.

This sequence belongs to the class-V pyridoxal-phosphate-dependent aminotransferase family. SerC subfamily. In terms of assembly, homodimer. Requires pyridoxal 5'-phosphate as cofactor.

Its subcellular location is the cytoplasm. It catalyses the reaction O-phospho-L-serine + 2-oxoglutarate = 3-phosphooxypyruvate + L-glutamate. The enzyme catalyses 4-(phosphooxy)-L-threonine + 2-oxoglutarate = (R)-3-hydroxy-2-oxo-4-phosphooxybutanoate + L-glutamate. Its pathway is amino-acid biosynthesis; L-serine biosynthesis; L-serine from 3-phospho-D-glycerate: step 2/3. It functions in the pathway cofactor biosynthesis; pyridoxine 5'-phosphate biosynthesis; pyridoxine 5'-phosphate from D-erythrose 4-phosphate: step 3/5. Functionally, catalyzes the reversible conversion of 3-phosphohydroxypyruvate to phosphoserine and of 3-hydroxy-2-oxo-4-phosphonooxybutanoate to phosphohydroxythreonine. The polypeptide is Phosphoserine aminotransferase (Vibrio vulnificus (strain YJ016)).